A 544-amino-acid chain; its full sequence is GMP synthase [glutamine-hydrolyzing] (544 aa).

The Glutamine amidotransferase type-1 domain maps to 12–210 (TILILDFGSQ…VKNVCGVRDG (199 aa)). The active-site Nucleophile is the Cys-88. Active-site residues include His-184 and Glu-186. Residues 211-419 (WSMESFIPKE…LNIPEHLVGR (209 aa)) enclose the GMPS ATP-PPase domain. Residue 239 to 245 (SGGVDST) participates in ATP binding. Positions 312, 481, 536, and 542 each coordinate XMP.

Homodimer. Also forms a small population of homotetramers. Mg(2+) is required as a cofactor.

The protein localises to the cytoplasm. It localises to the cytosol. It catalyses the reaction XMP + L-glutamine + ATP + H2O = GMP + L-glutamate + AMP + diphosphate + 2 H(+). It participates in purine metabolism; GMP biosynthesis; GMP from XMP (L-Gln route): step 1/1. The enzyme is inhibited by ECC1385; although this compound fails to inhibit growth of the organism. In terms of biological role, catalyzes the conversion of xanthine monophosphate (XMP) to GMP in the presence of glutamine and ATP through an adenyl-XMP intermediate. This chain is GMP synthase [glutamine-hydrolyzing], found in Cryptococcus neoformans var. grubii serotype A (strain H99 / ATCC 208821 / CBS 10515 / FGSC 9487) (Filobasidiella neoformans var. grubii).